We begin with the raw amino-acid sequence, 131 residues long: Small ribosomal subunit protein bS6 (131 aa).

The tract at residues 98-131 (EASPMVKAKDERRERRDDFANETADDAEAGDSEE) is disordered. Residues 104 to 116 (KAKDERRERRDDF) are compositionally biased toward basic and acidic residues. A compositionally biased stretch (acidic residues) spans 120–131 (TADDAEAGDSEE).

The protein belongs to the bacterial ribosomal protein bS6 family.

In terms of biological role, binds together with bS18 to 16S ribosomal RNA. The polypeptide is Small ribosomal subunit protein bS6 (Salmonella dublin (strain CT_02021853)).